Reading from the N-terminus, the 374-residue chain is Flagellar P-ring protein (374 aa).

The signal sequence occupies residues 1 to 29 (MSGLGFTGVVRIAVMALLALAFLGAPAHA). Residues 296 to 311 (ESPQVSQPNPLSNGRT) show a composition bias toward polar residues. Positions 296 to 316 (ESPQVSQPNPLSNGRTVMTPR) are disordered.

It belongs to the FlgI family. As to quaternary structure, the basal body constitutes a major portion of the flagellar organelle and consists of four rings (L,P,S, and M) mounted on a central rod.

Its subcellular location is the periplasm. It is found in the bacterial flagellum basal body. Functionally, assembles around the rod to form the L-ring and probably protects the motor/basal body from shearing forces during rotation. This Nitrobacter winogradskyi (strain ATCC 25391 / DSM 10237 / CIP 104748 / NCIMB 11846 / Nb-255) protein is Flagellar P-ring protein.